A 439-amino-acid chain; its full sequence is Trigger factor (439 aa).

Residues 163 to 248 (GDIAVIDFEG…LNQIKERVLP (86 aa)) enclose the PPIase FKBP-type domain.

Belongs to the FKBP-type PPIase family. Tig subfamily.

It is found in the cytoplasm. The catalysed reaction is [protein]-peptidylproline (omega=180) = [protein]-peptidylproline (omega=0). In terms of biological role, involved in protein export. Acts as a chaperone by maintaining the newly synthesized protein in an open conformation. Functions as a peptidyl-prolyl cis-trans isomerase. In Syntrophotalea carbinolica (strain DSM 2380 / NBRC 103641 / GraBd1) (Pelobacter carbinolicus), this protein is Trigger factor.